Here is a 196-residue protein sequence, read N- to C-terminus: Deoxyribose-phosphate aldolase (196 aa).

Asp-91 acts as the Proton donor/acceptor in catalysis. The active-site Schiff-base intermediate with acetaldehyde is Lys-153. Lys-182 serves as the catalytic Proton donor/acceptor.

It belongs to the DeoC/FbaB aldolase family. DeoC type 1 subfamily.

It localises to the cytoplasm. It catalyses the reaction 2-deoxy-D-ribose 5-phosphate = D-glyceraldehyde 3-phosphate + acetaldehyde. The protein operates within carbohydrate degradation; 2-deoxy-D-ribose 1-phosphate degradation; D-glyceraldehyde 3-phosphate and acetaldehyde from 2-deoxy-alpha-D-ribose 1-phosphate: step 2/2. Its function is as follows. Catalyzes a reversible aldol reaction between acetaldehyde and D-glyceraldehyde 3-phosphate to generate 2-deoxy-D-ribose 5-phosphate. The chain is Deoxyribose-phosphate aldolase from Mycoplasma mycoides subsp. mycoides SC (strain CCUG 32753 / NCTC 10114 / PG1).